A 470-amino-acid chain; its full sequence is MKPLLRSHETQYYSLYPDTLNGLHNVFRTIGNSVQSDTVRRLNLGYLDGDNRRGNLAGGLELLRDATTPNASRMNITRPLDTSTSGATAMIMQSLRTDVAENITLLTGDSRATISRQVTLTDFCFPDAEMPGLIILSIRHPLDINSEALYATPAGRDPRVMETVWYELSELAAVSVNRVNGSGVRPSLVSLSFLIAARASDYADKCGAEALRAHVISNYGRRRMEEKLDRFGICLITMLRCRVFPHRHFQLLGGLISWISQREIASITAVVRGPQESIKTEQTAMPRSSVYVPACAYIDFDKDIRVIHEERSSSSLYLVFVYTQKFGRETVRIYVMRSRLGEWAFREGLGYMYSGVRSNNAITGVDGLIVPHGANVNMEFPLTKTLDLRNRDRRLGIAARSRDLNKADWKVDLRGRPTKESCMYAAYCRLGHLDESSVPVKKFERCGSLDIPVIWIPGVIWNIGTWIECY.

Belongs to the herpesviridae TRX1 protein family. As to quaternary structure, interacts with TRX2, MCP and capsid vertex component 2/CVC2.

The protein resides in the virion. Its subcellular location is the host nucleus. Structural component of the T=16 icosahedral capsid. The capsid is composed of pentamers and hexamers of major capsid protein/MCP, which are linked together by heterotrimers called triplexes. These triplexes are formed by a single molecule of triplex protein 1/TRX1 and two copies of triplex protein 2/TRX2. Additionally, TRX1 is required for efficient transport of TRX2 to the nucleus, which is the site of capsid assembly. This Gallid herpesvirus 2 (strain Chicken/Md5/ATCC VR-987) (GaHV-2) protein is Triplex capsid protein 1.